A 296-amino-acid polypeptide reads, in one-letter code: uncharacterized protein (296 aa).

In terms of domain architecture, FAD-binding FR-type spans 1–95 (MYKIVSKKEL…VGPLGVPSEF (95 aa)).

This is an uncharacterized protein from Clostridium beijerinckii (Clostridium MP).